The sequence spans 656 residues: NADH-ubiquinone oxidoreductase chain 5 (656 aa).

A run of 17 helical transmembrane segments spans residues 5–23 (IIILPVLGSIVAGFFGRKL), 30–52 (IITCSCVIVTTILALLAWVEVGF), 81–103 (LTVSMLLPVLIISSLVHIYSISY), 112–129 (RFFSYLSLFTFMMIILVT), 133–155 (YLLMFVGWEGVGVCSYLLVSFWF), 168–190 (FLTNRVGDCFLTIGMFAILWSLG), 200–222 (LAPYINENIITIIGICLVIGAMA), 243–262 (VSALIHAATMVTAGVYLLMR), 272–294 (TVLLICLWLGAITTVFSSLVGLF), 301–320 (VIAYSTMSQLGLMVVAIGLS), 324–346 (IALFHLVNHAFYKAALFLGAGSI), 367–389 (PLTYSIILIASLSLAAFPFLTGF), 409–431 (SVYAISTIGAIFTTLYSVKVIYL), 452–471 (IFLTLPLVILAIFSIFFGYL), 514–536 (FIFTVLFSILAILLSEFIPGSVF), 607–629 (LSTGVVTSYALYILLGLISFIII), and 634–653 (QISSSLIVLLIILTLFSLNF).

It belongs to the complex I subunit 5 family.

It is found in the mitochondrion inner membrane. It carries out the reaction a ubiquinone + NADH + 5 H(+)(in) = a ubiquinol + NAD(+) + 4 H(+)(out). In terms of biological role, core subunit of the mitochondrial membrane respiratory chain NADH dehydrogenase (Complex I) that is believed to belong to the minimal assembly required for catalysis. Complex I functions in the transfer of electrons from NADH to the respiratory chain. The immediate electron acceptor for the enzyme is believed to be ubiquinone. This Cryphonectria parasitica (Chestnut blight fungus) protein is NADH-ubiquinone oxidoreductase chain 5 (ND5).